The chain runs to 217 residues: MNLILMGLPGAGKGTQAEKIIEKYGIPHISTGDMFRAAMKNETELGLKAKSYMDAGELVPDEVTIGIVRDRLSQDDCQNGFLLDGFPRTVAQAEALEDILASLDKKLDYVINIDVPEQLLMDRLTGRRVSPTSGRTYHVIFNPPKVEGICDVDGSELIQRDDDKPETVKKRLEVNQKQAQPLIDFYSEKGYLQNINGDQDISRVFEDINELLKGLSS.

10–15 contributes to the ATP binding site; the sequence is GAGKGT. An NMP region spans residues 30–59; the sequence is STGDMFRAAMKNETELGLKAKSYMDAGELV. Residues T31, R36, 57 to 59, 85 to 88, and Q92 each bind AMP; these read ELV and GFPR. Positions 126–163 are LID; sequence GRRVSPTSGRTYHVIFNPPKVEGICDVDGSELIQRDDD. ATP-binding positions include R127 and 136 to 137; that span reads TY. Residues R160 and R171 each coordinate AMP. Q199 lines the ATP pocket.

Belongs to the adenylate kinase family. As to quaternary structure, monomer.

It localises to the cytoplasm. It catalyses the reaction AMP + ATP = 2 ADP. The protein operates within purine metabolism; AMP biosynthesis via salvage pathway; AMP from ADP: step 1/1. Its function is as follows. Catalyzes the reversible transfer of the terminal phosphate group between ATP and AMP. Plays an important role in cellular energy homeostasis and in adenine nucleotide metabolism. This Halalkalibacterium halodurans (strain ATCC BAA-125 / DSM 18197 / FERM 7344 / JCM 9153 / C-125) (Bacillus halodurans) protein is Adenylate kinase.